A 63-amino-acid polypeptide reads, in one-letter code: Large ribosomal subunit protein bL33m (63 aa).

The protein belongs to the bacterial ribosomal protein bL33 family.

The protein localises to the mitochondrion. This chain is Large ribosomal subunit protein bL33m (mrpl33), found in Dictyostelium discoideum (Social amoeba).